The primary structure comprises 279 residues: Protein phosphatase 1 regulatory subunit 3E (279 aa).

A phosphoserine mark is found at serine 16 and serine 33. Positions 28 to 87 (RSQRPSLEEESEEEPGEGGTRPGARSRAHVPGRGRRARSAPAGGGGARTARSRSPDTRKR) are disordered. A compositionally biased stretch (basic residues) spans 51–65 (ARSRAHVPGRGRRAR). Serine 66 carries the phosphoserine modification. Positions 87–90 (RVRF) match the PP1-binding motif motif. Residues 154-259 (AARLQAQRIC…NNGGRDYALL (106 aa)) form the CBM21 domain. The glycogen-binding motif stretch occupies residues 176 to 198 (GSARVLDLAYEKRVSVRWSADGW). The substrate-binding motif stretch occupies residues 248 to 256 (WDNNGGRDY).

In terms of biological role, acts as a glycogen-targeting subunit for PP1. PP1 is involved in glycogen metabolism and contributes to the activation of glycogen synthase leading to an increase in glycogen synthesis. The polypeptide is Protein phosphatase 1 regulatory subunit 3E (Ppp1r3e) (Mus musculus (Mouse)).